We begin with the raw amino-acid sequence, 175 residues long: Disulfide bond formation protein B (175 aa).

At 1–13 (MTALTRFAHSRSS) the chain is on the cytoplasmic side. Residues 14–30 (WFLLTGTAIGLEAAALY) form a helical membrane-spanning segment. At 31–48 (FQYVMKLDPCVMCIYQRL) the chain is on the periplasmic side. C40 and C43 form a disulfide bridge. Residues 49–64 (AVFGILVAGLIGMTAP) traverse the membrane as a helical segment. The Cytoplasmic segment spans residues 65-71 (KYRLIRI). The chain crosses the membrane as a helical span at residues 72 to 89 (LGASCWAVSATWGLKLAL). The Periplasmic segment spans residues 90-144 (ALVNMQNNPSPFATCSFLPEFPTWMPLHEWFPAVMLPTGMCTDLPWRFMDVTMAE). An intrachain disulfide couples C104 to C130. The chain crosses the membrane as a helical span at residues 145–163 (WMVVVFSTFLVIWLLFIVP). Over 164–175 (ILSGSTKPSLYK) the chain is Cytoplasmic.

This sequence belongs to the DsbB family.

It localises to the cell inner membrane. Functionally, required for disulfide bond formation in some periplasmic proteins. Acts by oxidizing the DsbA protein. The polypeptide is Disulfide bond formation protein B (Shewanella sp. (strain W3-18-1)).